The sequence spans 187 residues: Large ribosomal subunit protein bL9 (187 aa).

Residues 155–187 (AQRGGMVTGLREEDEEEEVEETATEEGGEETAA) form a disordered region. Over residues 166 to 187 (EEDEEEEVEETATEEGGEETAA) the composition is skewed to acidic residues.

This sequence belongs to the bacterial ribosomal protein bL9 family.

Its function is as follows. Binds to the 23S rRNA. The polypeptide is Large ribosomal subunit protein bL9 (Rhodospirillum centenum (strain ATCC 51521 / SW)).